A 146-amino-acid polypeptide reads, in one-letter code: Anti-sigma F factor (146 aa).

Belongs to the anti-sigma-factor family.

It catalyses the reaction L-seryl-[protein] + ATP = O-phospho-L-seryl-[protein] + ADP + H(+). It carries out the reaction L-threonyl-[protein] + ATP = O-phospho-L-threonyl-[protein] + ADP + H(+). In terms of biological role, binds to sigma F and blocks its ability to form an RNA polymerase holoenzyme (E-sigma F). Phosphorylates SpoIIAA on a serine residue. This phosphorylation may enable SpoIIAA to act as an anti-anti-sigma factor that counteracts SpoIIAB and thus releases sigma F from inhibition. The sequence is that of Anti-sigma F factor from Lysinibacillus sphaericus (Bacillus sphaericus).